The chain runs to 211 residues: Thiamine-phosphate synthase (211 aa).

Residues 39–41 and Asn71 each bind 4-amino-2-methyl-5-(diphosphooxymethyl)pyrimidine; that span reads QLR. Residues Asp72 and Asp91 each coordinate Mg(2+). Ser110 contributes to the 4-amino-2-methyl-5-(diphosphooxymethyl)pyrimidine binding site. 136 to 138 contributes to the 2-[(2R,5Z)-2-carboxy-4-methylthiazol-5(2H)-ylidene]ethyl phosphate binding site; the sequence is TGT. Lys139 lines the 4-amino-2-methyl-5-(diphosphooxymethyl)pyrimidine pocket. 2-[(2R,5Z)-2-carboxy-4-methylthiazol-5(2H)-ylidene]ethyl phosphate is bound by residues Gly167 and 187–188; that span reads VS.

Belongs to the thiamine-phosphate synthase family. Requires Mg(2+) as cofactor.

The catalysed reaction is 2-[(2R,5Z)-2-carboxy-4-methylthiazol-5(2H)-ylidene]ethyl phosphate + 4-amino-2-methyl-5-(diphosphooxymethyl)pyrimidine + 2 H(+) = thiamine phosphate + CO2 + diphosphate. The enzyme catalyses 2-(2-carboxy-4-methylthiazol-5-yl)ethyl phosphate + 4-amino-2-methyl-5-(diphosphooxymethyl)pyrimidine + 2 H(+) = thiamine phosphate + CO2 + diphosphate. It catalyses the reaction 4-methyl-5-(2-phosphooxyethyl)-thiazole + 4-amino-2-methyl-5-(diphosphooxymethyl)pyrimidine + H(+) = thiamine phosphate + diphosphate. Its pathway is cofactor biosynthesis; thiamine diphosphate biosynthesis; thiamine phosphate from 4-amino-2-methyl-5-diphosphomethylpyrimidine and 4-methyl-5-(2-phosphoethyl)-thiazole: step 1/1. In terms of biological role, condenses 4-methyl-5-(beta-hydroxyethyl)thiazole monophosphate (THZ-P) and 2-methyl-4-amino-5-hydroxymethyl pyrimidine pyrophosphate (HMP-PP) to form thiamine monophosphate (TMP). The chain is Thiamine-phosphate synthase from Xanthobacter autotrophicus (strain ATCC BAA-1158 / Py2).